Here is a 525-residue protein sequence, read N- to C-terminus: Ribosomal protein S6 kinase beta-1 (525 aa).

Positions Met1–Met54 are disordered. The TOS motif signature appears at Phe28–Leu32. Over residues Ile30–Glu46 the composition is skewed to acidic residues. The 262-residue stretch at Phe91–Phe352 folds into the Protein kinase domain. ATP-binding positions include Leu97–Val105 and Lys123. The active-site Proton acceptor is the Asp218. Thr252 bears the Phosphothreonine; by PDPK1 mark. In terms of domain architecture, AGC-kinase C-terminal spans Arg353–Lys423. Residues Ser380–Thr399 form a disordered region. The span at Gln381 to Thr399 shows a compositional bias: polar residues. Residue Ser394 is modified to Phosphoserine. A Phosphothreonine; by MTOR, NEK6 and NEK7 modification is found at Thr412. Residues Glu424–Leu525 form an autoinhibitory domain region. A phosphoserine mark is found at Ser434 and Ser441. Residue Thr444 is modified to Phosphothreonine. A phosphoserine mark is found at Ser447 and Ser452. The segment at Val486–Gln509 is disordered. At Lys516 the chain carries N6-acetyllysine.

This sequence belongs to the protein kinase superfamily. AGC Ser/Thr protein kinase family. S6 kinase subfamily. Interacts with PPP1R9A/neurabin-1. Interacts with RPTOR. Interacts with IRS1. Interacts with EIF3B and EIF3C. Interacts with TRAF4. Interacts with POLDIP3. Interacts (via N-terminus) with IER5. In terms of processing, phosphorylation at Thr-412 is regulated by mTORC1. The phosphorylation at this site is maintained by an agonist-dependent autophosphorylation mechanism. Activated by phosphorylation at Thr-252 by PDPK1. Dephosphorylation by PPP1CC at Thr-412 in mitochondrion.

It localises to the cytoplasm. The protein localises to the synapse. It is found in the synaptosome. The protein resides in the mitochondrion outer membrane. Its subcellular location is the mitochondrion. The enzyme catalyses L-seryl-[protein] + ATP = O-phospho-L-seryl-[protein] + ADP + H(+). It catalyses the reaction L-threonyl-[protein] + ATP = O-phospho-L-threonyl-[protein] + ADP + H(+). With respect to regulation, activation requires multiple phosphorylation events on serine/threonine residues. Activation appears to be first mediated by phosphorylation of multiple sites in the autoinhibitory domain, which facilitates phosphorylation at Thr-412, disrupting the autoinhibitory mechanism and allowing phosphorylation of Thr-252 by PDPK1. The active conformation of the kinase is believed to be stabilized by a mechanism involving three conserved phosphorylation sites located in the kinase domain activation loop (Thr-252) and in the AGC-kinase C-terminal domain (Ser-394 in the middle of the tail/linker region and Thr-412 within a hydrophobic motif at its end). Activated by mTORC1; isoform Alpha I and isoform Alpha II are sensitive to rapamycin, which inhibits activating phosphorylation at Thr-412. Activated by PDPK1. Functionally, serine/threonine-protein kinase that acts downstream of mTOR signaling in response to growth factors and nutrients to promote cell proliferation, cell growth and cell cycle progression. Regulates protein synthesis through phosphorylation of EIF4B, RPS6 and EEF2K, and contributes to cell survival by repressing the pro-apoptotic function of BAD. Under conditions of nutrient depletion, the inactive form associates with the EIF3 translation initiation complex. Upon mitogenic stimulation, phosphorylation by the mechanistic target of rapamycin complex 1 (mTORC1) leads to dissociation from the EIF3 complex and activation. The active form then phosphorylates and activates several substrates in the pre-initiation complex, including the EIF2B complex and the cap-binding complex component EIF4B. Also controls translation initiation by phosphorylating a negative regulator of EIF4A, PDCD4, targeting it for ubiquitination and subsequent proteolysis. Promotes initiation of the pioneer round of protein synthesis by phosphorylating POLDIP3/SKAR. In response to IGF1, activates translation elongation by phosphorylating EEF2 kinase (EEF2K), which leads to its inhibition and thus activation of EEF2. Also plays a role in feedback regulation of mTORC2 by mTORC1 by phosphorylating MAPKAP1/SIN1, MTOR and RICTOR, resulting in the inhibition of mTORC2 and AKT1 signaling. Also involved in feedback regulation of mTORC1 and mTORC2 by phosphorylating DEPTOR. Mediates cell survival by phosphorylating the pro-apoptotic protein BAD and suppressing its pro-apoptotic function. Phosphorylates mitochondrial URI1 leading to dissociation of a URI1-PPP1CC complex. The free mitochondrial PPP1CC can then dephosphorylate RPS6KB1 at Thr-412, which is proposed to be a negative feedback mechanism for the RPS6KB1 anti-apoptotic function. Mediates TNF-alpha-induced insulin resistance by phosphorylating IRS1 at multiple serine residues, resulting in accelerated degradation of IRS1. In cells lacking functional TSC1-2 complex, constitutively phosphorylates and inhibits GSK3B. May be involved in cytoskeletal rearrangement through binding to neurabin. Phosphorylates and activates the pyrimidine biosynthesis enzyme CAD, downstream of MTOR. Following activation by mTORC1, phosphorylates EPRS and thereby plays a key role in fatty acid uptake by adipocytes and also most probably in interferon-gamma-induced translation inhibition. This chain is Ribosomal protein S6 kinase beta-1 (RPS6KB1), found in Oryctolagus cuniculus (Rabbit).